The primary structure comprises 154 residues: uncharacterized protein (154 aa).

Phosphoserine is present on Ser-47.

It to yeast YPL229w.

This is an uncharacterized protein from Saccharomyces cerevisiae (strain ATCC 204508 / S288c) (Baker's yeast).